A 483-amino-acid chain; its full sequence is Serine hydroxymethyltransferase, cytosolic (483 aa).

Residue lysine 257 is modified to N6-(pyridoxal phosphate)lysine.

It belongs to the SHMT family. As to quaternary structure, homotetramer. Identified in complex with ABRAXAS2 and the other subunits of the BRISC complex, at least composed of ABRAXAS2, BRCC3/BRCC36, BABAM2 and BABAM1/NBA1. Pyridoxal 5'-phosphate serves as cofactor.

The protein localises to the cytoplasm. It catalyses the reaction (6R)-5,10-methylene-5,6,7,8-tetrahydrofolate + glycine + H2O = (6S)-5,6,7,8-tetrahydrofolate + L-serine. The protein operates within one-carbon metabolism; tetrahydrofolate interconversion. Its function is as follows. Interconversion of serine and glycine. This is Serine hydroxymethyltransferase, cytosolic (SHMT1) from Pongo abelii (Sumatran orangutan).